A 144-amino-acid chain; its full sequence is Large ribosomal subunit protein uL16 (144 aa).

The protein belongs to the universal ribosomal protein uL16 family. As to quaternary structure, part of the 50S ribosomal subunit.

In terms of biological role, binds 23S rRNA and is also seen to make contacts with the A and possibly P site tRNAs. This Clostridium beijerinckii (strain ATCC 51743 / NCIMB 8052) (Clostridium acetobutylicum) protein is Large ribosomal subunit protein uL16.